The primary structure comprises 655 residues: p-hydroxybenzoic acid efflux pump subunit AaeB (655 aa).

11 helical membrane-spanning segments follow: residues 13 to 33 (FAVK…HFQL), 38 to 58 (WAVL…GGEP), 69 to 89 (LRII…IAMI), 93 to 113 (LLMI…SSLV), 121 to 141 (WGLA…EPLL), 152 to 172 (EIVI…PRSI), 370 to 390 (LFWL…IAVV), 407 to 427 (FIYG…VIIP), 431 to 451 (QSML…GIEV), 459 to 479 (MGAL…TFHF), and 482 to 502 (FLDS…VILL).

This sequence belongs to the aromatic acid exporter ArAE (TC 2.A.85) family.

The protein localises to the cell inner membrane. Forms an efflux pump with AaeA. Could function as a metabolic relief valve, allowing to eliminate certain compounds when they accumulate to high levels in the cell. The polypeptide is p-hydroxybenzoic acid efflux pump subunit AaeB (Escherichia coli (strain SMS-3-5 / SECEC)).